Consider the following 150-residue polypeptide: D-aminoacyl-tRNA deacylase (150 aa).

A Gly-cisPro motif, important for rejection of L-amino acids motif is present at residues 138 to 139 (GP).

It belongs to the DTD family. In terms of assembly, homodimer.

It is found in the cytoplasm. It catalyses the reaction glycyl-tRNA(Ala) + H2O = tRNA(Ala) + glycine + H(+). The enzyme catalyses a D-aminoacyl-tRNA + H2O = a tRNA + a D-alpha-amino acid + H(+). Its function is as follows. An aminoacyl-tRNA editing enzyme that deacylates mischarged D-aminoacyl-tRNAs. Also deacylates mischarged glycyl-tRNA(Ala), protecting cells against glycine mischarging by AlaRS. Acts via tRNA-based rather than protein-based catalysis; rejects L-amino acids rather than detecting D-amino acids in the active site. By recycling D-aminoacyl-tRNA to D-amino acids and free tRNA molecules, this enzyme counteracts the toxicity associated with the formation of D-aminoacyl-tRNA entities in vivo and helps enforce protein L-homochirality. This is D-aminoacyl-tRNA deacylase from Chlorobium phaeobacteroides (strain DSM 266 / SMG 266 / 2430).